The sequence spans 475 residues: MKLRLRHHETRETLKLELADADTLHDLRRRINPTVPSSVHLSLNRKDELITPSPEDTLRSLGLISGDLIYFSLEAGESSNWKLRDSETVASQSESNQTSVHDSIGFAEVDVVPDQAKSNPNTSVEDPEGDISGMEGPEPMDVEQLDMELAAAGSKRLSEPFFLKNILLEKSGDTSELTTLALSVHAVMLESGFVLLNHGSDKFNFSKELLTVSLRYTLPELIKSKDTNTIESVSVKFQNLGPVVVVYGTVGGSSGRVHMNLDKRRFVPVIDLVMDTSTSDEEGSSSIYREVFMFWRMVKDRLVIPLLIGICDKAGLEPPPCLMRLPTELKLKILELLPGVSIGNMACVCTEMRYLASDNDLWKQKCLEEVNNFVVTEAGDSVNWKARFATFWRQKQLAAASDTFWRQNQLGRRNISTGRSGIRFPRIIGDPPFTWFNGDRMHGSIGIHPGQSARGLGRRTWGQLFTPRCNLGGLN.

The segment at 114–133 (DQAKSNPNTSVEDPEGDISG) is disordered. The 47-residue stretch at 319–365 (PPCLMRLPTELKLKILELLPGVSIGNMACVCTEMRYLASDNDLWKQK) folds into the F-box domain.

Part of a SCF (ASK-cullin-F-box) protein ligase complex. Interacts with SKP1A/ASK1 and SPK1B/ASK2.

It localises to the nucleus. It functions in the pathway protein modification; protein ubiquitination. Component of SCF(ASK-cullin-F-box) E3 ubiquitin ligase complexes, which may mediate the ubiquitination and subsequent proteasomal degradation of target proteins. This chain is F-box protein SKIP22 (SKIP22), found in Arabidopsis thaliana (Mouse-ear cress).